A 444-amino-acid polypeptide reads, in one-letter code: Acyl-CoA 6-desaturase (444 aa).

Residues 1-131 (MGKGGNQGEG…DMNLFKTNHV (131 aa)) lie on the Cytoplasmic side of the membrane. The 78-residue stretch at 18–95 (MPTFSWEEIQ…LKPLLIGELA (78 aa)) folds into the Cytochrome b5 heme-binding domain. A helical membrane pass occupies residues 132-152 (FFLLLLAHIIALESIAWFTVF). Over 153–157 (YFGNG) the chain is Lumenal. The chain crosses the membrane as a helical span at residues 158–178 (WIPTLITAFVLATSQAQAGWL). Topologically, residues 179–264 (QHDYGHLSVY…KYLPYNHQHE (86 aa)) are cytoplasmic. Positions 180-184 (HDYGH) match the Histidine box-1 motif. A Histidine box-2 motif is present at residues 217 to 221 (HFQHH). The helical transmembrane segment at 265–285 (YFFLIGPPLLIPMYFQYQIIM) threads the bilayer. The Lumenal segment spans residues 286–305 (TMIVHKNWVDLAWAISYYIR). The helical transmembrane segment at 306–326 (FFVTYIPFYGILGALLFLNFI) threads the bilayer. Residues 327–444 (RFLESHWFVW…KLWLDAYLHK (118 aa)) lie on the Cytoplasmic side of the membrane. The Histidine box-3 signature appears at 382–386 (QIEHH).

It belongs to the fatty acid desaturase type 1 family.

Its subcellular location is the endoplasmic reticulum membrane. It catalyses the reaction (9Z,12Z)-octadecadienoyl-CoA + 2 Fe(II)-[cytochrome b5] + O2 + 2 H(+) = (6Z,9Z,12Z)-octadecatrienoyl-CoA + 2 Fe(III)-[cytochrome b5] + 2 H2O. It carries out the reaction (9Z,12Z,15Z)-octadecatrienoyl-CoA + 2 Fe(II)-[cytochrome b5] + O2 + 2 H(+) = (6Z,9Z,12Z,15Z)-octadecatetraenoyl-CoA + 2 Fe(III)-[cytochrome b5] + 2 H2O. The catalysed reaction is (9Z,12Z,15Z,18Z,21Z)-tetracosapentaenoyl-CoA + 2 Fe(II)-[cytochrome b5] + O2 + 2 H(+) = (6Z,9Z,12Z,15Z,18Z,21Z)-tetracosahexaenoyl-CoA + 2 Fe(III)-[cytochrome b5] + 2 H2O. The enzyme catalyses (11E)-octadecenoyl-CoA + 2 Fe(II)-[cytochrome b5] + O2 + 2 H(+) = (6Z,11E)-octadecadienoyl-CoA + 2 Fe(III)-[cytochrome b5] + 2 H2O. It catalyses the reaction (11Z,14Z)-eicosadienoyl-CoA + 2 Fe(II)-[cytochrome b5] + O2 + 2 H(+) = (8Z,11Z,14Z)-eicosatrienoyl-CoA + 2 Fe(III)-[cytochrome b5] + 2 H2O. It carries out the reaction (11Z,14Z,17Z)-eicosatrienoyl-CoA + 2 Fe(II)-[cytochrome b5] + O2 + 2 H(+) = (8Z,11Z,14Z,17Z)-eicosatetraenoyl-CoA + 2 Fe(III)-[cytochrome b5] + 2 H2O. The protein operates within lipid metabolism; polyunsaturated fatty acid biosynthesis. Functionally, involved in the biosynthesis of highly unsaturated fatty acids (HUFA) from the essential polyunsaturated fatty acids (PUFA) linoleic acid (LA) (18:2n-6) and alpha-linolenic acid (ALA) (18:3n-3) precursors, acting as a fatty acyl-coenzyme A (CoA) desaturase that introduces a cis double bond at carbon 6 of the fatty acyl chain. Catalyzes the first and rate limiting step in this pathway which is the desaturation of LA (18:2n-6) and ALA (18:3n-3) into gamma-linoleate (GLA) (18:3n-6) and stearidonate (18:4n-3), respectively. Subsequently, in the biosynthetic pathway of HUFA n-3 series, it desaturates tetracosapentaenoate (24:5n-3) to tetracosahexaenoate (24:6n-3), which is then converted to docosahexaenoate (DHA)(22:6n-3), an important lipid for nervous system function. It can also desaturate (11E)-octadecenoate (trans-vaccenoate) at carbon 6 generating (6Z,11E)-octadecadienoate. In addition to Delta-6 activity, this enzyme exhibits Delta-8 activity with slight biases toward n-3 fatty acyl-CoA substrates. In Macaca fascicularis (Crab-eating macaque), this protein is Acyl-CoA 6-desaturase (FADS2).